The chain runs to 153 residues: ORM1-like protein 1 (153 aa).

Residues 1-26 (MNVGVAHSEVNPNTRVMNSRGMWLTY) lie on the Cytoplasmic side of the membrane. Helical transmembrane passes span 27-46 (ALGV…FSVP) and 47-67 (VAWT…LHAV). The Cytoplasmic segment spans residues 68-100 (KGTPFETPDQGKARLLTHWEQLDYGVQFTSSRK). The chain crosses the membrane as a helical span at residues 101–121 (FLTISPIILYFLASFYTKYDP). The Extracellular segment spans residues 122-123 (TH). A helical membrane pass occupies residues 124-144 (FFINTASLLSVLIPKLPQLHG). Residues 145-153 (VRIFGINKY) lie on the Cytoplasmic side of the membrane.

The protein belongs to the ORM family. Ceramide-sensitive subunit of the serine palmitoyltransferase (SPT) complex, which is also composed of SPTLC1, SPTLC2/3 and SPTSSA/B.

The protein localises to the endoplasmic reticulum membrane. Functionally, plays an essential role in the homeostatic regulation of sphingolipid de novo biosynthesis by modulating the activity of the serine palmitoyltransferase (SPT) in response to ceramide levels. When complexed to SPT, the binding of ceramides to its N-terminus stabilizes a conformation that block SPT substrate entry, hence preventing SPT catalytic activity. Through this mechanism, maintains ceramide levels at sufficient concentrations for the production of complex sphingolipids, but which prevents the accumulation of ceramides to levels that trigger apoptosis. The chain is ORM1-like protein 1 (ormdl1) from Xenopus laevis (African clawed frog).